The following is a 542-amino-acid chain: GATA-type transcription factor sreA (542 aa).

The span at 1–10 (MLTLRSSSDT) shows a compositional bias: polar residues. The tract at residues 1–172 (MLTLRSSSDT…SAQNASGCGS (172 aa)) is disordered. Residues 44-63 (ADLRPDSFDASRSPDGDKAS) show a composition bias toward basic and acidic residues. Low complexity-rich tracts occupy residues 75 to 117 (SSDQ…PKAS) and 148 to 168 (SSTSDPRASPAASDASAQNAS). Positions 178-196 (CPGGGSCNGTGGAVGCDGC) are cystein-rich region (CRR). Residues 210–223 (APSARQARASPSAQ) are compositionally biased toward low complexity. A disordered region spans residues 210–248 (APSARQARASPSAQTSEEQAQSGLDALDSASQDASGMPK). Residues 250–274 (CQNCGTTLTPLWRRDDQGNTICNAC) form a GATA-type zinc finger. Over residues 289–300 (MKKTVIKRRKRV) the composition is skewed to basic residues. Disordered stretches follow at residues 289–408 (MKKT…PATR) and 461–525 (SNAP…REAE). Composition is skewed to polar residues over residues 311–320 (AGSSDNSSVS) and 369–387 (KPTQSTSSPGLNTLINHSP). A compositionally biased stretch (low complexity) spans 396-407 (ESTSAESAPPAT). Polar residues predominate over residues 464 to 483 (PARSQTQTQPQPGTRSYSPN). The stretch at 510–542 (DKVKAARRAQLQREAENMREALRAKERELASLK) forms a coiled coil.

It is found in the nucleus. GATA-type transcription repressor that regulates iron acquisition genes through specific binding the GATA sequence elements of target promoters. SreA targets include genes encoding a number of key iron-regulated factors such as the siderophore biosynthesis genes. Is dispensable for growth on keratin substrates. SreA represses the expression of hapX and the siderophore system during iron sufficient conditions by an iron-sensing mechanism, while hapX represses sreA and activates the siderophore system during iron-limiting conditions resulting in efficient iron uptake and inhibition of iron-consuming pathways. The polypeptide is GATA-type transcription factor sreA (Arthroderma benhamiae (strain ATCC MYA-4681 / CBS 112371) (Trichophyton mentagrophytes)).